The following is a 94-amino-acid chain: Integration host factor subunit beta (94 aa).

Belongs to the bacterial histone-like protein family. In terms of assembly, heterodimer of an alpha and a beta chain.

Functionally, this protein is one of the two subunits of integration host factor, a specific DNA-binding protein that functions in genetic recombination as well as in transcriptional and translational control. In Actinobacillus succinogenes (strain ATCC 55618 / DSM 22257 / CCUG 43843 / 130Z), this protein is Integration host factor subunit beta.